The primary structure comprises 321 residues: DNA repair and recombination protein RadA (321 aa).

ATP is bound at residue 111–118; that stretch reads GEFGSGKT.

This sequence belongs to the eukaryotic RecA-like protein family.

In terms of biological role, involved in DNA repair and in homologous recombination. Binds and assemble on single-stranded DNA to form a nucleoprotein filament. Hydrolyzes ATP in a ssDNA-dependent manner and promotes DNA strand exchange between homologous DNA molecules. This Sulfolobus acidocaldarius (strain ATCC 33909 / DSM 639 / JCM 8929 / NBRC 15157 / NCIMB 11770) protein is DNA repair and recombination protein RadA.